A 1490-amino-acid polypeptide reads, in one-letter code: DNA-directed RNA polymerase subunit beta' (1490 aa).

The Zn(2+) site is built by Cys67, Cys69, Cys82, and Cys85. Residues Asp499, Asp501, and Asp503 each contribute to the Mg(2+) site. 4 residues coordinate Zn(2+): Cys868, Cys944, Cys951, and Cys954.

This sequence belongs to the RNA polymerase beta' chain family. As to quaternary structure, the RNAP catalytic core consists of 2 alpha, 1 beta, 1 beta' and 1 omega subunit. When a sigma factor is associated with the core the holoenzyme is formed, which can initiate transcription. Mg(2+) serves as cofactor. It depends on Zn(2+) as a cofactor.

The enzyme catalyses RNA(n) + a ribonucleoside 5'-triphosphate = RNA(n+1) + diphosphate. DNA-dependent RNA polymerase catalyzes the transcription of DNA into RNA using the four ribonucleoside triphosphates as substrates. This chain is DNA-directed RNA polymerase subunit beta', found in Chlorobaculum tepidum (strain ATCC 49652 / DSM 12025 / NBRC 103806 / TLS) (Chlorobium tepidum).